A 242-amino-acid polypeptide reads, in one-letter code: Transcription factor TCP17 (242 aa).

The region spanning 33–91 (GKDRHSKVCTVRGLRDRRIRLSVMTAIQVYDLQERLGLSQPSKVIDWLLEVAKNDVDLL) is the TCP domain.

As to quaternary structure, interacts with SPL. In terms of tissue distribution, expressed in cotyledons, particularly in the vascular region, in leaves, roots, stems, buds, flowers and siliques.

The protein resides in the nucleus. In terms of biological role, plays a pivotal role in the control of morphogenesis of shoot organs by negatively regulating the expression of boundary-specific genes such as CUC genes, probably through the induction of miRNA (e.g. miR164). Participates in ovule development. The chain is Transcription factor TCP17 (TCP17) from Arabidopsis thaliana (Mouse-ear cress).